The following is a 270-amino-acid chain: MLPYPQIDPVALAIGPLKIHWYGLMYLIGIGGAWFLASRRLNRFDPTWTKEKLSDLIFWLSMGVIVGGRLGYVLFYDLPAYIANPTLIFEVWKGGMAFHGGFIGVMIAAWWFGRRNGKSFFQLMDFVAPMVPIGLGAGRIGNFINAELWGKPTDVPWAMIFPPFSDPAQLPRHPSQLYQFALEGVALFLILYIFSRKPRPTMAVSGMFALFYGIFRFVVEFVRVPDAQLGYLAFGWVTMGQILSLPMILGGLGLLWWAYNRPQPLKNTAL.

The next 7 membrane-spanning stretches (helical) occupy residues 10–30 (VALA…LIGI), 56–76 (LIFW…VLFY), 92–112 (WKGG…AWWF), 120–140 (FFQL…AGRI), 174–194 (PSQL…LYIF), 202–222 (MAVS…VEFV), and 236–256 (WVTM…GLLW). Residue R139 coordinates a 1,2-diacyl-sn-glycero-3-phospho-(1'-sn-glycerol).

The protein belongs to the Lgt family.

The protein localises to the cell inner membrane. It catalyses the reaction L-cysteinyl-[prolipoprotein] + a 1,2-diacyl-sn-glycero-3-phospho-(1'-sn-glycerol) = an S-1,2-diacyl-sn-glyceryl-L-cysteinyl-[prolipoprotein] + sn-glycerol 1-phosphate + H(+). Its pathway is protein modification; lipoprotein biosynthesis (diacylglyceryl transfer). Catalyzes the transfer of the diacylglyceryl group from phosphatidylglycerol to the sulfhydryl group of the N-terminal cysteine of a prolipoprotein, the first step in the formation of mature lipoproteins. This is Phosphatidylglycerol--prolipoprotein diacylglyceryl transferase from Pseudomonas fluorescens (strain SBW25).